The primary structure comprises 186 residues: Acireductone dioxygenase (186 aa).

The Fe(2+) site is built by His96, His98, Glu102, and His140. Residues His96, His98, Glu102, and His140 each contribute to the Ni(2+) site.

Belongs to the acireductone dioxygenase (ARD) family. Monomer. Requires Fe(2+) as cofactor. Ni(2+) serves as cofactor.

The catalysed reaction is 1,2-dihydroxy-5-(methylsulfanyl)pent-1-en-3-one + O2 = 3-(methylsulfanyl)propanoate + CO + formate + 2 H(+). The enzyme catalyses 1,2-dihydroxy-5-(methylsulfanyl)pent-1-en-3-one + O2 = 4-methylsulfanyl-2-oxobutanoate + formate + 2 H(+). It functions in the pathway amino-acid biosynthesis; L-methionine biosynthesis via salvage pathway; L-methionine from S-methyl-5-thio-alpha-D-ribose 1-phosphate: step 5/6. Catalyzes 2 different reactions between oxygen and the acireductone 1,2-dihydroxy-3-keto-5-methylthiopentene (DHK-MTPene) depending upon the metal bound in the active site. Fe-containing acireductone dioxygenase (Fe-ARD) produces formate and 2-keto-4-methylthiobutyrate (KMTB), the alpha-ketoacid precursor of methionine in the methionine recycle pathway. Ni-containing acireductone dioxygenase (Ni-ARD) produces methylthiopropionate, carbon monoxide and formate, and does not lie on the methionine recycle pathway. The sequence is that of Acireductone dioxygenase from Methylococcus capsulatus (strain ATCC 33009 / NCIMB 11132 / Bath).